A 213-amino-acid chain; its full sequence is MLNKIFYIIMGPPGSGKGTQSQRLAHQLKLPHMSSGELFRSAIDSASPLGIKAAEYINQGLLVPDAIVWGMVQEALNQPECQSGCIIDGFPRTLDQAILLNDFFMQSYADYRVIQLDVSNEEIIRRIHSRFICPSCKHVYNQNQGLSECPTCQMKLVRRSDDTLEVIHKRLESYEKLTAPLIDYYQELGKLTRIPSEASPDDVFQSIEACIKA.

14 to 19 (GSGKGT) is a binding site for ATP. The segment at 34–63 (SSGELFRSAIDSASPLGIKAAEYINQGLLV) is NMP. Residues Ser-35, Arg-40, 61-63 (LLV), 89-92 (GFPR), and Gln-96 contribute to the AMP site. The LID stretch occupies residues 129–162 (SRFICPSCKHVYNQNQGLSECPTCQMKLVRRSDD). ATP is bound at residue Arg-130. 2 residues coordinate Zn(2+): Cys-133 and Cys-136. 139–140 (VY) lines the ATP pocket. Residues Cys-149 and Cys-152 each coordinate Zn(2+). AMP-binding residues include Arg-159 and Arg-170. Ala-198 serves as a coordination point for ATP.

The protein belongs to the adenylate kinase family. As to quaternary structure, monomer.

The protein localises to the cytoplasm. It catalyses the reaction AMP + ATP = 2 ADP. Its pathway is purine metabolism; AMP biosynthesis via salvage pathway; AMP from ADP: step 1/1. Functionally, catalyzes the reversible transfer of the terminal phosphate group between ATP and AMP. Plays an important role in cellular energy homeostasis and in adenine nucleotide metabolism. This chain is Adenylate kinase, found in Chlamydia abortus (strain DSM 27085 / S26/3) (Chlamydophila abortus).